The primary structure comprises 725 residues: 1,4-alpha-glucan branching enzyme GlgB (725 aa).

Catalysis depends on D403, which acts as the Nucleophile. Catalysis depends on E456, which acts as the Proton donor.

Belongs to the glycosyl hydrolase 13 family. GlgB subfamily. Monomer.

It catalyses the reaction Transfers a segment of a (1-&gt;4)-alpha-D-glucan chain to a primary hydroxy group in a similar glucan chain.. It participates in glycan biosynthesis; glycogen biosynthesis. Functionally, catalyzes the formation of the alpha-1,6-glucosidic linkages in glycogen by scission of a 1,4-alpha-linked oligosaccharide from growing alpha-1,4-glucan chains and the subsequent attachment of the oligosaccharide to the alpha-1,6 position. The polypeptide is 1,4-alpha-glucan branching enzyme GlgB (Pectobacterium atrosepticum (strain SCRI 1043 / ATCC BAA-672) (Erwinia carotovora subsp. atroseptica)).